Consider the following 105-residue polypeptide: MAWTPLLLLFLSHCTGSLSQAVLTQPTSLSASPGASARLTCTLRSGISVGSYRIYWYQQKPGSPPRYLLNYYSDSDKHQGSGVPSRFSGSKDASTNAGILFISGL.

An N-terminal signal peptide occupies residues 1–19 (MAWTPLLLLFLSHCTGSLS). The interval 20-44 (QAVLTQPTSLSASPGASARLTCTLR) is framework-1. The Ig-like domain occupies 20-105 (QAVLTQPTSL…NAGILFISGL (86 aa)). The tract at residues 45–53 (SGISVGSYR) is complementarity-determining-1. The interval 54 to 70 (IYWYQQKPGSPPRYLLN) is framework-2. A complementarity-determining-2 region spans residues 71–77 (YYSDSDK). Residues 78–105 (HQGSGVPSRFSGSKDASTNAGILFISGL) are framework-3.

As to quaternary structure, immunoglobulins are composed of two identical heavy chains and two identical light chains; disulfide-linked.

The protein resides in the secreted. Its subcellular location is the cell membrane. Probable non-functional open reading frame (ORF) of V region of the variable domain of immunoglobulin light chains. Non-functional ORF generally cannot participate in the synthesis of a productive immunoglobulin chain due to altered V-(D)-J or switch recombination and/or splicing site (at mRNA level) and/or conserved amino acid change (protein level). Immunoglobulins, also known as antibodies, are membrane-bound or secreted glycoproteins produced by B lymphocytes. In the recognition phase of humoral immunity, the membrane-bound immunoglobulins serve as receptors which, upon binding of a specific antigen, trigger the clonal expansion and differentiation of B lymphocytes into immunoglobulins-secreting plasma cells. Secreted immunoglobulins mediate the effector phase of humoral immunity, which results in the elimination of bound antigens. The antigen binding site is formed by the variable domain of one heavy chain, together with that of its associated light chain. Thus, each immunoglobulin has two antigen binding sites with remarkable affinity for a particular antigen. The variable domains are assembled by a process called V-(D)-J rearrangement and can then be subjected to somatic hypermutations which, after exposure to antigen and selection, allow affinity maturation for a particular antigen. This Homo sapiens (Human) protein is Probable non-functional immunoglobulin lambda variable 5-48.